A 508-amino-acid polypeptide reads, in one-letter code: Hydroxymethylglutaryl-CoA synthase, mitochondrial (508 aa).

The N-terminal 37 residues, 1–37 (MQRLLAPARRVLQVKRVMQESSLSPAHLLPAAQQRFS), are a transit peptide targeting the mitochondrion. N6-succinyllysine is present on K52. 2 residues coordinate (3S)-3-hydroxy-3-methylglutaryl-CoA: E80 and A81. N6-acetyllysine; alternate is present on residues K83 and K118. N6-succinyllysine; alternate is present on residues K83 and K118. E132 acts as the Proton donor/acceptor in catalysis. Residues C166, N204, and T208 each coordinate (3S)-3-hydroxy-3-methylglutaryl-CoA. C166 (acyl-thioester intermediate) is an active-site residue. K221 carries the post-translational modification N6-succinyllysine. K243 carries the N6-acetyllysine modification. K256 carries the N6-acetyllysine; alternate modification. Position 256 is an N6-succinyllysine; alternate (K256). S258 and H301 together coordinate (3S)-3-hydroxy-3-methylglutaryl-CoA. H301 acts as the Proton donor/acceptor in catalysis. An N6-acetyllysine modification is found at K306. K310 lines the (3S)-3-hydroxy-3-methylglutaryl-CoA pocket. N6-acetyllysine; alternate is present on residues K310 and K327. N6-succinyllysine; alternate is present on residues K310 and K327. Residue K333 is modified to N6-succinyllysine. Residues K342, K350, K354, and K358 each carry the N6-acetyllysine; alternate modification. 4 positions are modified to N6-succinyllysine; alternate: K342, K350, K354, and K358. Residues N380 and S414 each contribute to the (3S)-3-hydroxy-3-methylglutaryl-CoA site. The residue at position 427 (K427) is an N6-acetyllysine. A Phosphoserine modification is found at S433. Position 437 is an N6-acetyllysine (K437). S440 bears the Phosphoserine mark. K447 carries the post-translational modification N6-acetyllysine; alternate. The residue at position 447 (K447) is an N6-succinyllysine; alternate. Residue S456 is modified to Phosphoserine. K473 carries the N6-acetyllysine; alternate modification. The residue at position 473 (K473) is an N6-succinyllysine; alternate. S477 carries the post-translational modification Phosphoserine.

This sequence belongs to the thiolase-like superfamily. HMG-CoA synthase family. As to quaternary structure, homodimer. Succinylated. Desuccinylated by SIRT5. Succinylation, at least at Lys-83 and Lys-310, inhibits the enzymatic activity. Liver and kidney.

The protein localises to the mitochondrion. It carries out the reaction acetoacetyl-CoA + acetyl-CoA + H2O = (3S)-3-hydroxy-3-methylglutaryl-CoA + CoA + H(+). Its pathway is metabolic intermediate biosynthesis; (R)-mevalonate biosynthesis; (R)-mevalonate from acetyl-CoA: step 2/3. Catalyzes the first irreversible step in ketogenesis, condensing acetyl-CoA to acetoacetyl-CoA to form HMG-CoA, which is converted by HMG-CoA reductase (HMGCR) into mevalonate. The sequence is that of Hydroxymethylglutaryl-CoA synthase, mitochondrial (Hmgcs2) from Rattus norvegicus (Rat).